A 194-amino-acid chain; its full sequence is Large ribosomal subunit protein eL15 (194 aa).

The segment at 164-194 (SAGKKGRGLRNKGIGAEKVRPSIRAHGRRGK) is disordered. Over residues 184-194 (PSIRAHGRRGK) the composition is skewed to basic residues.

Belongs to the eukaryotic ribosomal protein eL15 family.

The chain is Large ribosomal subunit protein eL15 (rpl15e) from Methanocaldococcus jannaschii (strain ATCC 43067 / DSM 2661 / JAL-1 / JCM 10045 / NBRC 100440) (Methanococcus jannaschii).